Reading from the N-terminus, the 154-residue chain is Transcription antitermination protein NusB (154 aa).

This sequence belongs to the NusB family.

Its function is as follows. Involved in transcription antitermination. Required for transcription of ribosomal RNA (rRNA) genes. Binds specifically to the boxA antiterminator sequence of the ribosomal RNA (rrn) operons. This is Transcription antitermination protein NusB from Hyphomonas neptunium (strain ATCC 15444).